Here is a 310-residue protein sequence, read N- to C-terminus: tRNA uridine(34) hydroxylase (310 aa).

A Rhodanese domain is found at 124-218; the sequence is SDPEVLLIDT…YFEEVPQEES (95 aa). Cys178 serves as the catalytic Cysteine persulfide intermediate.

The protein belongs to the TrhO family.

The catalysed reaction is uridine(34) in tRNA + AH2 + O2 = 5-hydroxyuridine(34) in tRNA + A + H2O. Its function is as follows. Catalyzes oxygen-dependent 5-hydroxyuridine (ho5U) modification at position 34 in tRNAs. In Pseudomonas putida (strain GB-1), this protein is tRNA uridine(34) hydroxylase.